A 544-amino-acid polypeptide reads, in one-letter code: MAAKQVLFSDEARAKMLDGVNTLANAVKVTLGPKGRNVVLDKSFGAPTITKDGVSVAKEIELEDKFENMGAQIVKEVASKTADVAGDGTTTATVLAQALLTEGLKAVAAGMNPMDLKRGIDKATARLVEELKALSKPCSDPKSIEQVGTISANSDATVGKLIADAMAKVGKEGVITVEEGKGFEDELDVVEGMQFDRGYLSPYFATNQENMTTDLENPYILIVDKKISNIRDLLPILEGVSKSGRALLIIAEDVESEALATLVVNNMRGVVKVCAVKAPGFGDRRKAMLEDIATLTGATFVSEDLSMKLEETNMEHLGTASRVLVTKDNTTIIDGAGEKEAIAKRINVIKANIAEANSDYDREKLQERLAKLSGGVAVIKVGAVTEAEMKEKKDRVDDALHATRAAVEEGIVAGGGVALIRAQKALDGLTGENDDQNHGIALLRKAIEAPLRQIVSNAGGESSVVVNQVKANQGNYGYNAANDTYGDMVEMGILDPTKVTRSALQHAASIAGLMITTEAMIGEIKEAAPAMPMGGGMGGMPGMI.

ATP-binding positions include 30 to 33, Lys-51, 87 to 91, Gly-415, 479 to 481, and Asp-495; these read TLGP, DGTTT, and NAA.

The protein belongs to the chaperonin (HSP60) family. In terms of assembly, forms a cylinder of 14 subunits composed of two heptameric rings stacked back-to-back. Interacts with the co-chaperonin GroES.

The protein resides in the cytoplasm. The catalysed reaction is ATP + H2O + a folded polypeptide = ADP + phosphate + an unfolded polypeptide.. Functionally, together with its co-chaperonin GroES, plays an essential role in assisting protein folding. The GroEL-GroES system forms a nano-cage that allows encapsulation of the non-native substrate proteins and provides a physical environment optimized to promote and accelerate protein folding. In Francisella tularensis subsp. tularensis (strain WY96-3418), this protein is Chaperonin GroEL.